The sequence spans 156 residues: Small ribosomal subunit protein uS7 (156 aa).

This sequence belongs to the universal ribosomal protein uS7 family. As to quaternary structure, part of the 30S ribosomal subunit. Contacts proteins S9 and S11.

Its function is as follows. One of the primary rRNA binding proteins, it binds directly to 16S rRNA where it nucleates assembly of the head domain of the 30S subunit. Is located at the subunit interface close to the decoding center, probably blocks exit of the E-site tRNA. The chain is Small ribosomal subunit protein uS7 from Clostridium novyi (strain NT).